We begin with the raw amino-acid sequence, 232 residues long: Glutathione-specific gamma-glutamylcyclotransferase (232 aa).

Val10–Ser15 contributes to the substrate binding site. The active-site Proton acceptor is the Glu115.

It belongs to the gamma-glutamylcyclotransferase family. ChaC subfamily.

It localises to the cytoplasm. It is found in the nucleus. The catalysed reaction is glutathione = L-cysteinylglycine + 5-oxo-L-proline. In terms of biological role, catalyzes the cleavage of glutathione into 5-oxo-L-proline and a Cys-Gly dipeptide. Acts specifically on glutathione, but not on other gamma-glutamyl peptides. Allows utilization of gluthathione through subsequent cleavage of the Cys-Gly dipeptide by Cys-Gly metallodipeptidase DUG1. The chain is Glutathione-specific gamma-glutamylcyclotransferase from Saccharomyces cerevisiae (strain ATCC 204508 / S288c) (Baker's yeast).